The primary structure comprises 762 residues: uncharacterized protein (762 aa).

Positions 734–762 (QQRPRVAAAAPPPPPQPPAAAVPTTQAST) are disordered. Residues 743–753 (APPPPPQPPAA) are compositionally biased toward pro residues.

This is an uncharacterized protein from Ostreid herpesvirus 1 (isolate France) (OsHV-1).